Consider the following 244-residue polypeptide: Transcriptional activator protein anr (244 aa).

An a nucleoside 3',5'-cyclic phosphate-binding site is contributed by 21 to 149; sequence APLCLPLSLT…RLMSREIRDD (129 aa). In terms of domain architecture, HTH crp-type spans 159-232; that stretch reads KTADERIATF…GKEVHILDSI (74 aa). A DNA-binding region (H-T-H motif) is located at residues 192–211; that stretch reads RNEIGNYLGLAVETVSRVFT.

In terms of biological role, transcriptional activator of anaerobic gene expression. The polypeptide is Transcriptional activator protein anr (anr) (Pseudomonas aeruginosa (strain ATCC 15692 / DSM 22644 / CIP 104116 / JCM 14847 / LMG 12228 / 1C / PRS 101 / PAO1)).